Reading from the N-terminus, the 116-residue chain is DNA-directed RNA polymerase subunit omega (116 aa).

Belongs to the RNA polymerase subunit omega family. As to quaternary structure, the RNAP catalytic core consists of 2 alpha, 1 beta, 1 beta' and 1 omega subunit. When a sigma factor is associated with the core the holoenzyme is formed, which can initiate transcription.

It carries out the reaction RNA(n) + a ribonucleoside 5'-triphosphate = RNA(n+1) + diphosphate. Its function is as follows. Promotes RNA polymerase assembly. Latches the N- and C-terminal regions of the beta' subunit thereby facilitating its interaction with the beta and alpha subunits. In Hyphomonas neptunium (strain ATCC 15444), this protein is DNA-directed RNA polymerase subunit omega.